A 697-amino-acid chain; its full sequence is Semaphorin-2A (697 aa).

An N-terminal signal peptide occupies residues 1-20; that stretch reads MAAKLWNLLLVAASVHLVGS. The Sema domain maps to 21 to 493; sequence VEQLHQDLIH…SDNIVRQIEL (473 aa). 2 N-linked (GlcNAc...) asparagine glycosylation sites follow: Asn63 and Asn66. Cys87 and Cys98 form a disulfide bridge. N-linked (GlcNAc...) asparagine glycosylation is found at Asn132, Asn198, and Asn283. 2 disulfides stabilise this stretch: Cys260–Cys367 and Cys284–Cys326. Asn369 carries N-linked (GlcNAc...) asparagine glycosylation. 2 cysteine pairs are disulfide-bonded: Cys496/Cys512 and Cys506/Cys521. Positions 526-634 constitute an Ig-like C2-type domain; sequence PGLLQDVTNT…LCSYNITVDA (109 aa). Residues Asn534, Asn629, and Asn679 are each glycosylated (N-linked (GlcNAc...) asparagine). Cys618 and Cys654 are joined by a disulfide. Over residues 673-685 the composition is skewed to polar residues; sequence QCSTKQNNSNQKT. The tract at residues 673–697 is disordered; it reads QCSTKQNNSNQKTHPNDIFHSNPVA.

It belongs to the semaphorin family. As to expression, expressed in a gradient in the developing limb bud epithelium during Ti pioneer axon outgrowth.

Its subcellular location is the secreted. In terms of biological role, acts as a chemorepulsive guidance molecule critical for axon fasciculation and for determining both the initial direction and subsequent pathfinding events of the Ti axon projection. This is Semaphorin-2A (SEMA-2A) from Schistocerca gregaria (Desert locust).